Here is a 212-residue protein sequence, read N- to C-terminus: Ribonuclease HII (212 aa).

Residues 24-212 (QLVAGVDEVG…PVKKALGIEE (189 aa)) enclose the RNase H type-2 domain. A divalent metal cation-binding residues include D30, E31, and D122.

Belongs to the RNase HII family. The cofactor is Mn(2+). It depends on Mg(2+) as a cofactor.

The protein resides in the cytoplasm. It catalyses the reaction Endonucleolytic cleavage to 5'-phosphomonoester.. In terms of biological role, endonuclease that specifically degrades the RNA of RNA-DNA hybrids. This chain is Ribonuclease HII, found in Vibrio campbellii (strain ATCC BAA-1116).